The chain runs to 454 residues: Maintenance of mitochondrial morphology protein 1 (454 aa).

Over 1–117 (MESNYTGMDG…SFSSWSFAQG (117 aa)) the chain is Lumenal. Residues 118–138 (LIVGQVSVVLVLIFFIKFFIF) traverse the membrane as a helical segment. The Cytoplasmic portion of the chain corresponds to 139–454 (SDSSTKTNPN…ESEPGRETHY (316 aa)). A disordered region spans residues 144 to 164 (KTNPNPAKNSSSTNSLSGLSS). Residues 153–164 (SSSTNSLSGLSS) show a composition bias toward low complexity. Residues 215-427 (PAESLDWFNV…EPRFQFIKLP (213 aa)) form the SMP-LTD domain. Residues arginine 253, tryptophan 411, arginine 415, tryptophan 430, arginine 432, and serine 433 each contribute to the a 1,2-diacyl-sn-glycero-3-phosphate site. The interval 434–454 (KNTREGKADVDESEPGRETHY) is disordered. The span at 435-454 (NTREGKADVDESEPGRETHY) shows a compositional bias: basic and acidic residues.

Belongs to the MMM1 family. In terms of assembly, homodimer. Component of the ER-mitochondria encounter structure (ERMES) or MDM complex, composed of MMM1, MDM10, MDM12 and MDM34. An MMM1 homodimer associates with one molecule of MDM12 on each side in a pairwise head-to-tail manner, and the SMP-LTD domains of MMM1 and MDM12 generate a continuous hydrophobic tunnel for phospholipid trafficking.

It localises to the endoplasmic reticulum membrane. Component of the ERMES/MDM complex, which serves as a molecular tether to connect the endoplasmic reticulum (ER) and mitochondria. Components of this complex are involved in the control of mitochondrial shape and protein biogenesis, and function in nonvesicular lipid trafficking between the ER and mitochondria. Preferentially binds to glycerophospholipids such as phosphatidylcholoine (PC), phosphatidic acid (PA), phosphatidylglycerol (PG), and phosphatidylserine (PS), but not to phosphatidylethanolamine (PE). The MDM12-MMM1 subcomplex functions in the major beta-barrel assembly pathway that is responsible for biogenesis of all outer membrane beta-barrel proteins, and acts in a late step after the SAM complex. The MDM10-MDM12-MMM1 subcomplex further acts in the TOM40-specific pathway after the action of the MDM12-MMM1 complex. Essential for establishing and maintaining the structure of mitochondria and maintenance of mtDNA nucleoids. In Zygosaccharomyces rouxii (strain ATCC 2623 / CBS 732 / NBRC 1130 / NCYC 568 / NRRL Y-229), this protein is Maintenance of mitochondrial morphology protein 1.